The chain runs to 531 residues: RCC1 and BTB domain-containing protein 1 (531 aa).

RCC1 repeat units lie at residues 40–91 (NDEV…LLTT), 93–145 (DGVV…ALAA), 147–198 (GELF…AVLD), 199–250 (SGEV…ALTD), 252–302 (GLLY…AAKT), and 304–356 (GGHV…FLTV). BTB domains lie at 370–437 (ADLK…DLPP) and 470–499 (ENAFSLFSAAVRYDAEDLEEFCFKFCINHL).

In terms of tissue distribution, in the retina, mainly expressed in the inner retina with strong signals reaching up to the outer plexiform layer (at protein level).

It localises to the nucleus. Its function is as follows. May be involved in cell cycle regulation by chromatin remodeling. This chain is RCC1 and BTB domain-containing protein 1 (Rcbtb1), found in Mus musculus (Mouse).